The sequence spans 349 residues: Protein-glutamate methylesterase/protein-glutamine glutaminase (349 aa).

The region spanning 5 to 122 is the Response regulatory domain; it reads RVLCVDDSAL…REGMLAYSEL (118 aa). A 4-aspartylphosphate modification is found at D56. Residues 152–344 enclose the CheB-type methylesterase domain; it reads LLSSEKLIAI…QRMLAQISSG (193 aa). Active-site residues include S164, H190, and D286.

It belongs to the CheB family. In terms of processing, phosphorylated by CheA. Phosphorylation of the N-terminal regulatory domain activates the methylesterase activity.

The protein resides in the cytoplasm. It carries out the reaction [protein]-L-glutamate 5-O-methyl ester + H2O = L-glutamyl-[protein] + methanol + H(+). It catalyses the reaction L-glutaminyl-[protein] + H2O = L-glutamyl-[protein] + NH4(+). Involved in chemotaxis. Part of a chemotaxis signal transduction system that modulates chemotaxis in response to various stimuli. Catalyzes the demethylation of specific methylglutamate residues introduced into the chemoreceptors (methyl-accepting chemotaxis proteins or MCP) by CheR. Also mediates the irreversible deamidation of specific glutamine residues to glutamic acid. The sequence is that of Protein-glutamate methylesterase/protein-glutamine glutaminase from Yersinia pseudotuberculosis serotype I (strain IP32953).